A 712-amino-acid polypeptide reads, in one-letter code: Potassium transporter 1 (712 aa).

The Cytoplasmic portion of the chain corresponds to 1–19 (MNQSPSLIEQGISQQHLKT). The chain crosses the membrane as a helical span at residues 20-40 (LSCANVLTLAYQSLGVIYGDL). Over 41–67 (STSPLYVYKTTFSGKLSLHEDDEEIFG) the chain is Extracellular. Residues 68 to 88 (VFSFIFWTFTLIALFKYVFIV) form a helical membrane-spanning segment. Residues 89–154 (LSADDNGEGG…FFEKHPKSQK (66 aa)) are Cytoplasmic-facing. The helical transmembrane segment at 155 to 175 (CLLLFVLLGTCMAIGDSVLTP) threads the bilayer. Residues 176–189 (TISVLSAVSGVKLK) lie on the Extracellular side of the membrane. Residues 190 to 210 (IPNLHENYVVIIACIILVAIF) form a helical membrane-spanning segment. Residues 211 to 219 (SVQRYGTHR) lie on the Cytoplasmic side of the membrane. Residues 220–240 (VAFIFAPISTAWLLSISSIGV) form a helical membrane-spanning segment. Residues 241–267 (YNTIKWNPRIVSALSPVYMYKFLRSTG) are Extracellular-facing. Residues 268–288 (VEGWVSLGGVVLSITGVETMF) form a helical membrane-spanning segment. The Cytoplasmic portion of the chain corresponds to 289 to 300 (ADLGHFSSLSIK). A helical membrane pass occupies residues 301-321 (VAFSFFVYPCLILAYMGEAAF). Residues 322–340 (LSKHHEDIQQSFYKAIPEP) are Extracellular-facing. A helical membrane pass occupies residues 341-361 (VFWPVFIVATFAAVVGSQAVI). Over 362–392 (SATFSIISQCCALDCFPRVKIIHTSSKIHGQ) the chain is Cytoplasmic. A helical membrane pass occupies residues 393-413 (IYIPEVNWMLMCLCLAVTIGL). At 414–424 (RDTNMMGHAYG) the chain is on the extracellular side. Residues 425–445 (LAVTSVMLVTTCLMTLVMTIV) traverse the membrane as a helical segment. The Cytoplasmic segment spans residues 446 to 449 (WKQR). The helical transmembrane segment at 450 to 470 (IITVLAFVVFFGSIELLYFSS) threads the bilayer. The Extracellular portion of the chain corresponds to 471–474 (CVYK). Residues 475–495 (VPEGGWIPILLSLTFMAVMYI) form a helical membrane-spanning segment. Residues 496–712 (WNYGTTKKHE…LLEVGMVYYV (217 aa)) are Cytoplasmic-facing.

It belongs to the HAK/KUP transporter (TC 2.A.72.3) family. Detected in the whole mature plant but preferentially expressed in roots and stems, and in potassium-starved plants.

It is found in the cell membrane. High-affinity potassium transporter that could play a major role in the uptake of potassium from the rhizosphere. May act as a low-affinity potassium transporter under high potassium concentrations. Could also transport rubidium. The polypeptide is Potassium transporter 1 (POT1) (Arabidopsis thaliana (Mouse-ear cress)).